The following is a 40-amino-acid chain: Light-harvesting protein B800/830/1020 beta-1 chain (40 aa).

The Cytoplasmic segment spans residues 1–20 (ANDIRPLRDFEDEEAQEFHQ). Positions 19 and 37 each coordinate a bacteriochlorophyll. Residues 21–40 (AAVQAFFLYVAVAFVAHLPV) form a helical membrane-spanning segment.

The protein belongs to the antenna complex beta subunit family. In terms of assembly, the core complex is formed by different alpha and beta chains, binding bacteriochlorophyll molecules, and arranged most probably in tetrameric structures disposed around the reaction center. The non-pigmented gamma chains may constitute additional components.

The protein localises to the cell inner membrane. Antenna complexes are light-harvesting systems, which transfer the excitation energy to the reaction centers. The polypeptide is Light-harvesting protein B800/830/1020 beta-1 chain (Halorhodospira halochloris (Ectothiorhodospira halochloris)).